Consider the following 68-residue polypeptide: U1-agatoxin-Ta1c (68 aa).

The signal sequence occupies residues methionine 1–cysteine 17. 3 disulfides stabilise this stretch: cysteine 23–cysteine 53, cysteine 39–cysteine 49, and cysteine 42–cysteine 62. Lysine 67 is modified (lysine amide).

The protein belongs to the helical arthropod-neuropeptide-derived (HAND) family. Expressed by the venom gland.

It localises to the secreted. Functionally, toxin that paralyzes insects. May have a direct effect on the insect central nervous system. The polypeptide is U1-agatoxin-Ta1c (Eratigena agrestis (Hobo spider)).